We begin with the raw amino-acid sequence, 711 residues long: Dendrin (711 aa).

4 disordered regions span residues 1–22 (MLDG…DEES), 49–273 (APSR…KKRL), 324–446 (DLNS…SQGL), and 479–677 (PSGV…AELS). Positions 75-84 (PGSPQPPPRR) are enriched in pro residues. Residues 102-134 (LAEVRAREQEKRKAASQEREAKETERKRRKAGG) adopt a coiled-coil conformation. Basic and acidic residues predominate over residues 105 to 127 (VRAREQEKRKAASQEREAKETER). The nuclear localization stretch occupies residues 113-131 (RKAASQEREAKETERKRRK). Positions 150–161 (APRVAQLAGLPA) are enriched in low complexity. The segment at 186 to 236 (GSAWAGPWGGRRPGPPSYEAHLLLRGSAGTAPRRRWDRPPPYVAPPSYEGP) is interaction with MAGI2. Composition is skewed to low complexity over residues 252 to 262 (PTSSAPAATPA) and 346 to 356 (APAGSATAAPC). Positions 341–436 (AGTEIAPAGS…LEGWKATRRA (96 aa)) are interaction with ACTN1. Phosphoserine is present on S389. The interval 408 to 709 (GGTGWRESLG…IRGTQQGNRK (302 aa)) is interaction with CD2AP and NPHS1. The segment covering 529-546 (GEAEGGRPGDSTLEERTF) has biased composition (basic and acidic residues).

In terms of assembly, forms a ternary complex with MAGI2 and SH3KBP1; recruits DDN to the cytoplasm. Interacts with MAGI1. Interacts with ACTN1 and may interact with WWC1. Interacts with the podocyte slit diaphragm proteins CD2AP, NPHS1 and NPHS2; the interaction with CD2AP and NPHS1 is direct. As to expression, specifically expressed in brain and kidney. Expressed in kidney glomerular capillary loops (at protein level).

The protein localises to the cell projection. It is found in the dendritic spine membrane. Its subcellular location is the cytoplasm. The protein resides in the endoplasmic reticulum membrane. It localises to the perikaryon. The protein localises to the nucleus. Its function is as follows. Promotes apoptosis of kidney glomerular podocytes. Podocytes are highly specialized cells essential to the ultrafiltration of blood, resulting in the extraction of urine and the retention of protein. The chain is Dendrin (DDN) from Homo sapiens (Human).